The primary structure comprises 399 residues: MQIYLGITICLVAFLTVIDCAIPYYRTHSNFGSLGRRKVRQVQRDLTYRWPNNTVPYYVGNVTSTIKKSVRLAIEELQAWTCIRFQNVNEKYSDGDSVRIVDLGSCSSPIGRQQIGTQDVSLTKNCWGMGTAIHELMHAIGIEHTQSRSDRNRYLDILAQNIDNRDLPNFELLSPRLWANLVPYDYGSVMHYSADSFSNKDDEQTMLPKDRSFIETMGSMIPNFYDFDQINQYYQCYDSCRNAGQLANCANGGIPNPNNCQVCNCPMGYGGDLCDQRPEGCGSTLVATDRWQKQKLSVRFSRNDDQYFTFCNSWIVGPSDRTLQVIYEITSDSIRRQICSFGCYEGGIEVKHLQDPRITNDRDCCLNTPLNLTTTVNPLPVILYTSGATVTYDFSYRYV.

The signal sequence occupies residues 1-20; that stretch reads MQIYLGITICLVAFLTVIDC. The region spanning 41-237 is the Peptidase M12A domain; that stretch reads QVQRDLTYRW…DQINQYYQCY (197 aa). Asn-52 and Asn-61 each carry an N-linked (GlcNAc...) asparagine glycan. Intrachain disulfides connect Cys-82–Cys-236, Cys-106–Cys-126, Cys-240–Cys-260, and Cys-265–Cys-274. His-134 provides a ligand contact to Zn(2+). Glu-135 is a catalytic residue. Residues His-138 and His-144 each coordinate Zn(2+). The EGF-like domain maps to 232–275; sequence QYYQCYDSCRNAGQLANCANGGIPNPNNCQVCNCPMGYGGDLCD. Residue Asn-371 is glycosylated (N-linked (GlcNAc...) asparagine).

It depends on Zn(2+) as a cofactor. In terms of tissue distribution, expressed in pharyngeal muscles, pharyngeal-intestinal valve, rectal gland cells and arcade cells.

The protein resides in the secreted. In terms of biological role, metalloprotease. The protein is Zinc metalloproteinase nas-25 (nas-25) of Caenorhabditis elegans.